Reading from the N-terminus, the 288-residue chain is Protoheme IX farnesyltransferase (288 aa).

A run of 9 helical transmembrane segments spans residues 16–36, 37–57, 88–108, 111–131, 138–158, 162–182, 210–230, 236–256, and 265–285; these read VWSL…PYFN, LHYI…SMGA, INGL…LAAF, LYAA…YSYL, WNII…WYTV, FSIL…IHVW, AICI…PAFF, VYMI…IVFV, and LKLF…VLIF.

Belongs to the UbiA prenyltransferase family. Protoheme IX farnesyltransferase subfamily.

Its subcellular location is the cell membrane. The enzyme catalyses heme b + (2E,6E)-farnesyl diphosphate + H2O = Fe(II)-heme o + diphosphate. It functions in the pathway porphyrin-containing compound metabolism; heme O biosynthesis; heme O from protoheme: step 1/1. Functionally, converts heme B (protoheme IX) to heme O by substitution of the vinyl group on carbon 2 of heme B porphyrin ring with a hydroxyethyl farnesyl side group. The sequence is that of Protoheme IX farnesyltransferase from Thermoplasma acidophilum (strain ATCC 25905 / DSM 1728 / JCM 9062 / NBRC 15155 / AMRC-C165).